We begin with the raw amino-acid sequence, 290 residues long: Protein MGF 110-9L (290 aa).

3 consecutive transmembrane segments (helical) span residues 1–19 (MKVIVLLLVLAVMQPVIQS), 128–148 (TENIKHTCLCMIATIALIGYI), and 163–183 (LLIFLGLYVLLGILMTNIIMN). Residues N242 and N267 are each glycosylated (N-linked (GlcNAc...) asparagine; by host).

It belongs to the asfivirus MGF 110 family.

The protein localises to the host membrane. In terms of biological role, plays a role in virus cell tropism, and may be required for efficient virus replication in macrophages. The polypeptide is Protein MGF 110-9L (Ornithodoros (relapsing fever ticks)).